We begin with the raw amino-acid sequence, 130 residues long: Small ribosomal subunit protein uS8 (130 aa).

This sequence belongs to the universal ribosomal protein uS8 family. In terms of assembly, part of the 30S ribosomal subunit. Contacts proteins S5 and S12.

In terms of biological role, one of the primary rRNA binding proteins, it binds directly to 16S rRNA central domain where it helps coordinate assembly of the platform of the 30S subunit. This chain is Small ribosomal subunit protein uS8, found in Vibrio cholerae serotype O1 (strain ATCC 39541 / Classical Ogawa 395 / O395).